Consider the following 394-residue polypeptide: Phosphoglycerate kinase (394 aa).

Substrate contacts are provided by residues 21–23 (DLN), arginine 36, 60–63 (HLGN), arginine 114, and arginine 147. ATP-binding positions include lysine 198, glutamate 315, and 341-344 (GGET).

Belongs to the phosphoglycerate kinase family. In terms of assembly, monomer.

It localises to the cytoplasm. It catalyses the reaction (2R)-3-phosphoglycerate + ATP = (2R)-3-phospho-glyceroyl phosphate + ADP. It functions in the pathway carbohydrate degradation; glycolysis; pyruvate from D-glyceraldehyde 3-phosphate: step 2/5. This chain is Phosphoglycerate kinase, found in Wigglesworthia glossinidia brevipalpis.